Consider the following 359-residue polypeptide: Pyruvate dehydrogenase E1 component subunit beta, mitochondrial (359 aa).

Residues 1-19 constitute a mitochondrion transit peptide; sequence MLGVIRNKTIRPSFSAFRF. E82 is a binding site for thiamine diphosphate. I135, A183, I184, and D186 together coordinate K(+).

In terms of assembly, tetramer of 2 alpha and 2 beta subunits. It depends on thiamine diphosphate as a cofactor.

It is found in the mitochondrion matrix. It catalyses the reaction N(6)-[(R)-lipoyl]-L-lysyl-[protein] + pyruvate + H(+) = N(6)-[(R)-S(8)-acetyldihydrolipoyl]-L-lysyl-[protein] + CO2. Its function is as follows. The pyruvate dehydrogenase complex catalyzes the overall conversion of pyruvate to acetyl-CoA and CO(2). It contains multiple copies of three enzymatic components: pyruvate dehydrogenase (E1), dihydrolipoamide acetyltransferase (E2) and lipoamide dehydrogenase (E3). This is Pyruvate dehydrogenase E1 component subunit beta, mitochondrial from Pisum sativum (Garden pea).